A 490-amino-acid polypeptide reads, in one-letter code: Betaine aldehyde dehydrogenase (490 aa).

K(+) is bound by residues Ser26, Ile27, and Asp93. 150-152 (GAW) provides a ligand contact to NAD(+). The active-site Charge relay system is Lys162. Residues 176–179 (KPSE) and 230–233 (GVET) contribute to the NAD(+) site. A K(+)-binding site is contributed by Leu246. The active-site Proton acceptor is the Glu252. Gly254, Cys286, and Glu387 together coordinate NAD(+). The Nucleophile role is filled by Cys286. Cys286 is subject to Cysteine sulfenic acid (-SOH). K(+) contacts are provided by Lys457 and Gly460. Catalysis depends on Glu464, which acts as the Charge relay system.

Belongs to the aldehyde dehydrogenase family. Dimer of dimers. The cofactor is K(+).

It catalyses the reaction betaine aldehyde + NAD(+) + H2O = glycine betaine + NADH + 2 H(+). The protein operates within amine and polyamine biosynthesis; betaine biosynthesis via choline pathway; betaine from betaine aldehyde: step 1/1. Involved in the biosynthesis of the osmoprotectant glycine betaine. Catalyzes the irreversible oxidation of betaine aldehyde to the corresponding acid. The polypeptide is Betaine aldehyde dehydrogenase (Acinetobacter baumannii (strain AB307-0294)).